A 730-amino-acid polypeptide reads, in one-letter code: Elongation factor 2 (730 aa).

One can recognise a tr-type G domain in the interval 19-228 (TKIRNIGIVA…TGVSFKDVYD (210 aa)). Residues 28–35 (AHIDHGKT), 94–98 (DTPGH), and 148–151 (NKVD) each bind GTP. A Diphthamide modification is found at H596.

This sequence belongs to the TRAFAC class translation factor GTPase superfamily. Classic translation factor GTPase family. EF-G/EF-2 subfamily.

The protein localises to the cytoplasm. Its function is as follows. Catalyzes the GTP-dependent ribosomal translocation step during translation elongation. During this step, the ribosome changes from the pre-translocational (PRE) to the post-translocational (POST) state as the newly formed A-site-bound peptidyl-tRNA and P-site-bound deacylated tRNA move to the P and E sites, respectively. Catalyzes the coordinated movement of the two tRNA molecules, the mRNA and conformational changes in the ribosome. The sequence is that of Elongation factor 2 from Methanosarcina barkeri (strain Fusaro / DSM 804).